The primary structure comprises 414 residues: T-box transcription factor TBX3 (414 aa).

The segment at residues 114-287 is a DNA-binding region (T-box); sequence LWEQFHKRGT…NNPFAKGFRD (174 aa). Residues 359 to 414 are disordered; it reads XDSXDDXXLEXSEWGKISTTTXTHPWXQPAXGRQRVTTXGTKGAAVPKATSSPXTR.

The protein localises to the nucleus. In terms of biological role, transcriptional repressor involved in developmental processes. Binds to the palindromic T site 5'-TTCACACCTAGGTGTGAA-3' DNA sequence, or a half-site, which are present in the regulatory region of several genes. Probably plays a role in limb pattern formation. In Gallus gallus (Chicken), this protein is T-box transcription factor TBX3 (TBX3).